Consider the following 276-residue polypeptide: Ribosomal RNA small subunit methyltransferase A (276 aa).

The S-adenosyl-L-methionine site is built by N27, L29, G54, E75, D101, and N123.

The protein belongs to the class I-like SAM-binding methyltransferase superfamily. rRNA adenine N(6)-methyltransferase family. RsmA subfamily.

The protein localises to the cytoplasm. The enzyme catalyses adenosine(1518)/adenosine(1519) in 16S rRNA + 4 S-adenosyl-L-methionine = N(6)-dimethyladenosine(1518)/N(6)-dimethyladenosine(1519) in 16S rRNA + 4 S-adenosyl-L-homocysteine + 4 H(+). Functionally, specifically dimethylates two adjacent adenosines (A1518 and A1519) in the loop of a conserved hairpin near the 3'-end of 16S rRNA in the 30S particle. May play a critical role in biogenesis of 30S subunits. The sequence is that of Ribosomal RNA small subunit methyltransferase A from Bartonella tribocorum (strain CIP 105476 / IBS 506).